We begin with the raw amino-acid sequence, 209 residues long: Protein GrpE (209 aa).

It belongs to the GrpE family. As to quaternary structure, homodimer.

The protein resides in the cytoplasm. In terms of biological role, participates actively in the response to hyperosmotic and heat shock by preventing the aggregation of stress-denatured proteins, in association with DnaK and GrpE. It is the nucleotide exchange factor for DnaK and may function as a thermosensor. Unfolded proteins bind initially to DnaJ; upon interaction with the DnaJ-bound protein, DnaK hydrolyzes its bound ATP, resulting in the formation of a stable complex. GrpE releases ADP from DnaK; ATP binding to DnaK triggers the release of the substrate protein, thus completing the reaction cycle. Several rounds of ATP-dependent interactions between DnaJ, DnaK and GrpE are required for fully efficient folding. The sequence is that of Protein GrpE from Colwellia psychrerythraea (strain 34H / ATCC BAA-681) (Vibrio psychroerythus).